The following is a 434-amino-acid chain: DNA primase DnaG (434 aa).

Positions 171-250 constitute a Toprim domain; sequence DAIIIVEGRA…AFSPRRRSVE (80 aa). 3 residues coordinate Mg(2+): Glu177, Asp219, and Asp221. Positions 290 to 319 are disordered; sequence GEEEHSSVSQKEEGNNTTPDVPADLPEEPP. Residues 292–303 show a composition bias toward basic and acidic residues; the sequence is EEHSSVSQKEEG.

The protein belongs to the archaeal DnaG primase family. As to quaternary structure, forms a ternary complex with MCM helicase and DNA. Mg(2+) is required as a cofactor.

It carries out the reaction ssDNA + n NTP = ssDNA/pppN(pN)n-1 hybrid + (n-1) diphosphate.. In terms of biological role, RNA polymerase that catalyzes the synthesis of short RNA molecules used as primers for DNA polymerase during DNA replication. The polypeptide is DNA primase DnaG (Methanocorpusculum labreanum (strain ATCC 43576 / DSM 4855 / Z)).